The chain runs to 382 residues: Queuine tRNA-ribosyltransferase (382 aa).

Aspartate 93 serves as the catalytic Proton acceptor. Substrate contacts are provided by residues 93 to 97 (DSGGF), aspartate 147, glutamine 191, and glycine 218. Residues 249-255 (GVGKPED) are RNA binding. Aspartate 268 acts as the Nucleophile in catalysis. Positions 273–277 (TRNAR) are RNA binding; important for wobble base 34 recognition. Zn(2+) contacts are provided by cysteine 306, cysteine 308, cysteine 311, and histidine 337.

It belongs to the queuine tRNA-ribosyltransferase family. Homodimer. Within each dimer, one monomer is responsible for RNA recognition and catalysis, while the other monomer binds to the replacement base PreQ1. It depends on Zn(2+) as a cofactor.

It catalyses the reaction 7-aminomethyl-7-carbaguanine + guanosine(34) in tRNA = 7-aminomethyl-7-carbaguanosine(34) in tRNA + guanine. The protein operates within tRNA modification; tRNA-queuosine biosynthesis. Catalyzes the base-exchange of a guanine (G) residue with the queuine precursor 7-aminomethyl-7-deazaguanine (PreQ1) at position 34 (anticodon wobble position) in tRNAs with GU(N) anticodons (tRNA-Asp, -Asn, -His and -Tyr). Catalysis occurs through a double-displacement mechanism. The nucleophile active site attacks the C1' of nucleotide 34 to detach the guanine base from the RNA, forming a covalent enzyme-RNA intermediate. The proton acceptor active site deprotonates the incoming PreQ1, allowing a nucleophilic attack on the C1' of the ribose to form the product. After dissociation, two additional enzymatic reactions on the tRNA convert PreQ1 to queuine (Q), resulting in the hypermodified nucleoside queuosine (7-(((4,5-cis-dihydroxy-2-cyclopenten-1-yl)amino)methyl)-7-deazaguanosine). This chain is Queuine tRNA-ribosyltransferase, found in Haemophilus influenzae (strain ATCC 51907 / DSM 11121 / KW20 / Rd).